The chain runs to 320 residues: Methyltransferase gedG (320 aa).

Residues 61–154 (DAGAGNGVYS…QLRPGGTFAC (94 aa)) form a methyltransferase domain region. Positions 231–252 (GLLPPERRGEVTEPDHEGPHDQ) are disordered. Over residues 235–252 (PERRGEVTEPDHEGPHDQ) the composition is skewed to basic and acidic residues.

Belongs to the methyltransferase superfamily.

It participates in secondary metabolite biosynthesis. Methyltransferase; part of the gene cluster that mediates the biosynthesis of geodin, an intermediate in the biosynthesis of other natural products. The pathway begins with the synthesis of atrochrysone thioester by the polyketide synthase (PKS) gedC. The atrochrysone carboxyl ACP thioesterase gedB then breaks the thioester bond and releases the atrochrysone carboxylic acid from gedC. The atrochrysone carboxylic acid is then converted to atrochrysone which is further transformed into emodinanthrone. The next step is performed by the emodinanthrone oxygenase gedH that catalyzes the oxidation of emodinanthrone to emodin. Emodin O-methyltransferase encoded probably by gedA then catalyzes methylation of the 8-hydroxy group of emodin to form questin. Ring cleavage of questin by questin oxidase gedK leads to desmethylsulochrin via several intermediates including questin epoxide. Another methylation step probably catalyzed by methyltransferase gedG leads to the formation of sulochrin which is further converted to dihydrogeodin by the sulochrin halogenase gedL. Finally, the dihydrogeodin oxidase gedJ catalyzes the stereospecific phenol oxidative coupling reaction converting dihydrogeodin to geodin. In Aspergillus terreus (strain NIH 2624 / FGSC A1156), this protein is Methyltransferase gedG.